Reading from the N-terminus, the 185-residue chain is Peptidyl-tRNA hydrolase (185 aa).

TRNA is bound at residue tyrosine 14. Histidine 19 (proton acceptor) is an active-site residue. TRNA is bound by residues tyrosine 64, asparagine 66, and asparagine 112.

This sequence belongs to the PTH family. Monomer.

It localises to the cytoplasm. It carries out the reaction an N-acyl-L-alpha-aminoacyl-tRNA + H2O = an N-acyl-L-amino acid + a tRNA + H(+). Functionally, hydrolyzes ribosome-free peptidyl-tRNAs (with 1 or more amino acids incorporated), which drop off the ribosome during protein synthesis, or as a result of ribosome stalling. Catalyzes the release of premature peptidyl moieties from peptidyl-tRNA molecules trapped in stalled 50S ribosomal subunits, and thus maintains levels of free tRNAs and 50S ribosomes. This Lactobacillus helveticus (strain DPC 4571) protein is Peptidyl-tRNA hydrolase.